Consider the following 224-residue polypeptide: Acyl-protein thioesterase 1 (224 aa).

Active-site charge relay system residues include S116, D170, and H203.

This sequence belongs to the AB hydrolase superfamily. AB hydrolase 2 family.

Its subcellular location is the cytoplasm. It is found in the nucleus. It catalyses the reaction S-hexadecanoyl-L-cysteinyl-[protein] + H2O = L-cysteinyl-[protein] + hexadecanoate + H(+). Hydrolyzes fatty acids from S-acylated cysteine residues in proteins with a strong preference for palmitoylated G-alpha proteins over other acyl substrates. Mediates the deacylation of G-alpha proteins such as GPA1 in vivo, but has weak or no activity toward palmitoylated Ras proteins. Has weak lysophospholipase activity in vitro; however such activity may not exist in vivo. In Schizosaccharomyces pombe (strain 972 / ATCC 24843) (Fission yeast), this protein is Acyl-protein thioesterase 1.